Consider the following 496-residue polypeptide: Geranylhydroquinone 3''-hydroxylase CYP76B74 (496 aa).

Residues 3-23 (YTTILVGFLIGFVLFKALTRK) form a helical membrane-spanning segment. Cysteine 436 is a binding site for heme.

Belongs to the cytochrome P450 family. Heme serves as cofactor.

Its subcellular location is the endoplasmic reticulum membrane. The catalysed reaction is (2E)-geranylhydroquinone + reduced [NADPH--hemoprotein reductase] + O2 = (2Z)-3''-hydroxygeranylhydroquinone + oxidized [NADPH--hemoprotein reductase] + H2O + H(+). In terms of biological role, hydroxylase involved in the biosynthesis pathway of the red naphthoquinone pigment shikonin. Catalyzes the key step C-3''-hydroxylation of the prenylated phenolic intermediate geranylhydroquinone to form 3''-hydroxygeranylhydroquinone. The protein is Geranylhydroquinone 3''-hydroxylase CYP76B74 of Arnebia euchroma (Pink arnebia).